We begin with the raw amino-acid sequence, 357 residues long: MQLPEDATKRAPLALVSIILPVHNAEQWLDECLMSVLQQDFEGTMELSVFNDASKDKSRAIIEKWKVKLEDSGISVVIGGHDSPSPRGVGYSKNQAIAQSTGSYLCFLDSDDVMMPQRVRMQYEAAVQHPASIIGCQVRRDPPDSTERYTRWINQLTSDQLLTQVFTSHGPTVIMPTWFCSRAWFSHVGPFDEGGQGVPEDLLFFYEHLRKGGGVFRVDHSLLLYRYHLCAATHSVLEMTIWTHRVHFLEEQILPHWKSFTIWNAGKQGRKLYRSLTAASQHKVVAFCDIDKNKIRKGFYCHEDSQERPKPKVPILHFQAAQPPFVICVKLDLTGGEFEDNLKSLHLQEGRDFVHFS.

It belongs to the glycosyltransferase 2 family.

It localises to the cytoplasm. It catalyses the reaction queuosine(34) in tRNA(Tyr) + UDP-alpha-D-galactose = O-5''-beta-D-galactosylqueuosine(34) in tRNA(Tyr) + UDP + H(+). Glycosyltransferase that specifically catalyzes galactosylation of cytoplasmic tRNA(Tyr) modified with queuosine at position 34 (queuosine(34)). Galactosylates the cyclopentene hydroxyl group of queuosine(34) in tRNA(Tyr) to form galactosyl-queuosine(34). Mannosylation of queuosine(34) in tRNA(Tyr) is required to slow-down elongation at cognate codons UAC and suppress stop codon readthrough, thereby regulating protein translation. The polypeptide is Queuosine-tRNA galactosyltransferase (Rattus norvegicus (Rat)).